Consider the following 362-residue polypeptide: Homeobox protein extradenticle (362 aa).

The PBC domain maps to 34–225 (PRKQDIGEIL…VMILRSRFLD (192 aa)). Residues 41–120 (EILQQIMNIT…EGVAGPEKGG (80 aa)) are PBC-A. The PBC-B stretch occupies residues 123–225 (DFLSQSDLTG…VMILRSRFLD (103 aa)). Positions 226–288 (ARRKRRNFSK…NKRIRYKKNI (63 aa)) form a DNA-binding region, homeobox; TALE-type. The tract at residues 305–362 (GASPYSMGGPPSGAATPMMSPAPAQDSMGYSLGSGGYDQQQPYDGSMGYDQLHQDLSP) is disordered.

This sequence belongs to the TALE/PBX homeobox family.

The protein localises to the nucleus. Functionally, transcription factor which acts with the selector homeodomain proteins altering the regulation of downstream target genes such as wingless (wg), teashirt (tsh) and decapentaplegic (dpp), thus affecting segmental identity. This Anopheles gambiae (African malaria mosquito) protein is Homeobox protein extradenticle.